The chain runs to 371 residues: 4-hydroxy-3-methylbut-2-en-1-yl diphosphate synthase (flavodoxin) (371 aa).

4 residues coordinate [4Fe-4S] cluster: Cys270, Cys273, Cys305, and Glu312.

It belongs to the IspG family. [4Fe-4S] cluster is required as a cofactor.

It carries out the reaction (2E)-4-hydroxy-3-methylbut-2-enyl diphosphate + oxidized [flavodoxin] + H2O + 2 H(+) = 2-C-methyl-D-erythritol 2,4-cyclic diphosphate + reduced [flavodoxin]. It participates in isoprenoid biosynthesis; isopentenyl diphosphate biosynthesis via DXP pathway; isopentenyl diphosphate from 1-deoxy-D-xylulose 5-phosphate: step 5/6. In terms of biological role, converts 2C-methyl-D-erythritol 2,4-cyclodiphosphate (ME-2,4cPP) into 1-hydroxy-2-methyl-2-(E)-butenyl 4-diphosphate. The chain is 4-hydroxy-3-methylbut-2-en-1-yl diphosphate synthase (flavodoxin) from Shewanella baltica (strain OS223).